The sequence spans 936 residues: Aconitate hydratase A (936 aa).

Positions 401–449 (VTPDFDAEGPATENTSAQTAGTPASAADAKGNIPSAAAGAEGRPSNPVT) are disordered. The segment covering 412-422 (TENTSAQTAGT) has biased composition (polar residues). [4Fe-4S] cluster is bound by residues Cys472, Cys538, and Cys541.

This sequence belongs to the aconitase/IPM isomerase family. As to quaternary structure, monomer. The cofactor is [4Fe-4S] cluster.

It catalyses the reaction citrate = D-threo-isocitrate. The enzyme catalyses (2S,3R)-3-hydroxybutane-1,2,3-tricarboxylate = 2-methyl-cis-aconitate + H2O. It participates in carbohydrate metabolism; tricarboxylic acid cycle; isocitrate from oxaloacetate: step 2/2. Its pathway is organic acid metabolism; propanoate degradation. In terms of biological role, involved in the catabolism of short chain fatty acids (SCFA) via the tricarboxylic acid (TCA)(acetyl degradation route) and probably via the 2-methylcitrate cycle I (propionate degradation route). Catalyzes the reversible isomerization of citrate to isocitrate via cis-aconitate. Could catalyze the hydration of 2-methyl-cis-aconitate to yield (2R,3S)-2-methylisocitrate. The apo form of AcnA functions as a RNA-binding regulatory protein. The protein is Aconitate hydratase A (acn) of Corynebacterium jeikeium (strain K411).